Here is a 35-residue protein sequence, read N- to C-terminus: Conotoxin Cal6.1f (35 aa).

Residues 1–8 constitute a propeptide that is removed on maturation; that stretch reads GLIRPSKR. 3 disulfide bridges follow: C9/C25, C16/C29, and C24/C34.

Belongs to the conotoxin O1 superfamily. In terms of tissue distribution, expressed by the venom duct.

It localises to the secreted. Functionally, probable neurotoxin with unknown target. Possibly targets ion channels. This chain is Conotoxin Cal6.1f, found in Californiconus californicus (California cone).